A 520-amino-acid polypeptide reads, in one-letter code: Nucleolar protein 12 (520 aa).

Disordered stretches follow at residues 1–29 and 41–185; these read MGKK…NVSV and AGPV…DDDE. Residues 78-95 are compositionally biased toward acidic residues; sequence ASEDQFMEDAPESPDAAE. A compositionally biased stretch (basic and acidic residues) spans 120–132; that stretch reads SYMRRLAKEEQKE. A compositionally biased stretch (acidic residues) spans 144–168; sequence LEEESEDGEKESPQSEDGESEDEGA. RRM domains are found at residues 191–303 and 311–421; these read RTVF…NVAH and RCVF…RAKK. The disordered stretch occupies residues 472-520; it reads EGNRATADGSSRIRVRTKSRGSKAKKDSRSKKRAAAYKAAGGKKAKIGK. Basic residues predominate over residues 484–520; it reads IRVRTKSRGSKAKKDSRSKKRAAAYKAAGGKKAKIGK.

It belongs to the RRM RBM34 family.

It is found in the nucleus. It localises to the nucleolus. Its function is as follows. Involved in pre-25S rRNA processing. The protein is Nucleolar protein 12 (nop12) of Emericella nidulans (strain FGSC A4 / ATCC 38163 / CBS 112.46 / NRRL 194 / M139) (Aspergillus nidulans).